Here is a 655-residue protein sequence, read N- to C-terminus: Serine/threonine-protein kinase SKM1 (655 aa).

The PH domain maps to 3 to 118 (GVKKEGWISY…WLDAIFAKCP (116 aa)). Residues 123 to 136 (VSSPTNFTHKVHVG) form the CRIB domain. 2 stretches are compositionally biased toward basic and acidic residues: residues 265-276 (EEGRVHVSKEST) and 318-327 (KNHDSKTKWH). Residues 265–327 (EEGRVHVSKE…KNHDSKTKWH (63 aa)) are disordered. In terms of domain architecture, Protein kinase spans 360 to 639 (FQLVEKAGQG…VRKLLTFEFL (280 aa)). Residues 366–374 (AGQGASGAV) and lysine 406 contribute to the ATP site. Aspartate 507 acts as the Proton acceptor in catalysis.

The protein belongs to the protein kinase superfamily. STE Ser/Thr protein kinase family. STE20 subfamily.

The enzyme catalyses L-seryl-[protein] + ATP = O-phospho-L-seryl-[protein] + ADP + H(+). It carries out the reaction L-threonyl-[protein] + ATP = O-phospho-L-threonyl-[protein] + ADP + H(+). Functionally, may be involved in cellular signaling or cytoskeletal functions. May play a role in morphogenetic control. The polypeptide is Serine/threonine-protein kinase SKM1 (SKM1) (Saccharomyces cerevisiae (strain ATCC 204508 / S288c) (Baker's yeast)).